The primary structure comprises 210 residues: Large ribosomal subunit protein uL3 (210 aa).

The tract at residues 131–155 is disordered; sequence GPMSHGSKYHRRVGSMSATTDPGRT.

Belongs to the universal ribosomal protein uL3 family. Part of the 50S ribosomal subunit. Forms a cluster with proteins L14 and L19.

In terms of biological role, one of the primary rRNA binding proteins, it binds directly near the 3'-end of the 23S rRNA, where it nucleates assembly of the 50S subunit. In Thermoanaerobacter sp. (strain X514), this protein is Large ribosomal subunit protein uL3.